The following is a 493-amino-acid chain: UDP-N-acetylmuramoyl-L-alanyl-D-glutamate--2,6-diaminopimelate ligase (493 aa).

2 residues coordinate UDP-N-acetyl-alpha-D-muramoyl-L-alanyl-D-glutamate: leucine 30 and serine 32. 117–123 (GTNGKTT) is an ATP binding site. Residues asparagine 158, 159-160 (TT), serine 186, glutamine 192, and arginine 194 contribute to the UDP-N-acetyl-alpha-D-muramoyl-L-alanyl-D-glutamate site. At lysine 226 the chain carries N6-carboxylysine. Meso-2,6-diaminopimelate contacts are provided by residues arginine 388, 412 to 415 (DNPR), glycine 463, and glutamate 467. A Meso-diaminopimelate recognition motif motif is present at residues 412 to 415 (DNPR).

This sequence belongs to the MurCDEF family. MurE subfamily. Mg(2+) is required as a cofactor. In terms of processing, carboxylation is probably crucial for Mg(2+) binding and, consequently, for the gamma-phosphate positioning of ATP.

The protein localises to the cytoplasm. The enzyme catalyses UDP-N-acetyl-alpha-D-muramoyl-L-alanyl-D-glutamate + meso-2,6-diaminopimelate + ATP = UDP-N-acetyl-alpha-D-muramoyl-L-alanyl-gamma-D-glutamyl-meso-2,6-diaminopimelate + ADP + phosphate + H(+). Its pathway is cell wall biogenesis; peptidoglycan biosynthesis. Functionally, catalyzes the addition of meso-diaminopimelic acid to the nucleotide precursor UDP-N-acetylmuramoyl-L-alanyl-D-glutamate (UMAG) in the biosynthesis of bacterial cell-wall peptidoglycan. This Vibrio vulnificus (strain YJ016) protein is UDP-N-acetylmuramoyl-L-alanyl-D-glutamate--2,6-diaminopimelate ligase.